We begin with the raw amino-acid sequence, 333 residues long: UbiA prenyltransferase domain-containing protein 1 (333 aa).

Residues 13–33 (NAESPRGGERNDCGAGAERGP) form a disordered region. The next 8 helical transmembrane spans lie at 78–98 (LLVG…LVNT), 129–149 (FGVF…AVST), 155–175 (LALV…GIGF), 177–197 (YVAL…VMFA), 199–219 (AVQV…LALS), 240–260 (IVTL…TVLL), 265–285 (LIFC…LLTI), and 310–330 (LNLL…AGAL).

This sequence belongs to the UbiA prenyltransferase family.

It is found in the endoplasmic reticulum membrane. The protein localises to the golgi apparatus membrane. Its subcellular location is the mitochondrion membrane. It carries out the reaction menadiol + (2E,6E,10E)-geranylgeranyl diphosphate = menaquinol-4 + diphosphate. The enzyme catalyses all-trans-decaprenyl diphosphate + 4-hydroxybenzoate = 4-hydroxy-3-(all-trans-decaprenyl)benzoate + diphosphate. Its pathway is quinol/quinone metabolism; menaquinone biosynthesis. The protein operates within cofactor biosynthesis; ubiquinone biosynthesis. Functionally, prenyltransferase that mediates the formation of menaquinone-4 (MK-4) and coenzyme Q10. MK-4 is a vitamin K2 isoform required for endothelial cell development. Mediates the conversion of phylloquinone (PK) into MK-4, probably by cleaving the side chain of phylloquinone (PK) to release 2-methyl-1,4-naphthoquinone (menadione; K3) and then prenylating it with geranylgeranyl pyrophosphate (GGPP) to form MK-4. Also plays a role in cardiovascular development independently of MK-4 biosynthesis, by acting as a coenzyme Q10 biosynthetic enzyme: coenzyme Q10, also named ubiquinone, plays an important antioxidant role in the cardiovascular system. Mediates biosynthesis of coenzyme Q10 in the Golgi membrane, leading to protect cardiovascular tissues from NOS3/eNOS-dependent oxidative stress. The protein is UbiA prenyltransferase domain-containing protein 1 (UBIAD1) of Gallus gallus (Chicken).